Consider the following 627-residue polypeptide: Asparagine synthetase domain-containing protein 1 (627 aa).

Catalysis depends on cysteine 2, which acts as the For GATase activity. Residues 2-184 (CGICCSVSFS…ASGIFQIDLN (183 aa)) enclose the Glutamine amidotransferase type-2 domain. Residues 308-597 (ASKEVLKTCS…GLPASALLPK (290 aa)) enclose the Asparagine synthetase domain. Positions 373–404 (QQNHHEIPSEESSQSPAADEGPGEAEVPDRVT) are disordered.

The chain is Asparagine synthetase domain-containing protein 1 (Asnsd1) from Mus musculus (Mouse).